Here is a 451-residue protein sequence, read N- to C-terminus: Tubulin alpha-1 chain (451 aa).

Residue glutamine 11 coordinates GTP. At lysine 40 the chain carries N6-acetyllysine. Residues glutamate 71, glycine 144, threonine 145, threonine 179, asparagine 206, and asparagine 228 each coordinate GTP. Glutamate 71 provides a ligand contact to Mg(2+). The active site involves glutamate 254. The tract at residues 432–451 (YEEVGADSAEGDEEDEGDEY) is disordered.

Belongs to the tubulin family. In terms of assembly, dimer of alpha and beta chains. A typical microtubule is a hollow water-filled tube with an outer diameter of 25 nm and an inner diameter of 15 nM. Alpha-beta heterodimers associate head-to-tail to form protofilaments running lengthwise along the microtubule wall with the beta-tubulin subunit facing the microtubule plus end conferring a structural polarity. Microtubules usually have 13 protofilaments but different protofilament numbers can be found in some organisms and specialized cells. It depends on Mg(2+) as a cofactor. In terms of processing, undergoes a tyrosination/detyrosination cycle, the cyclic removal and re-addition of a C-terminal tyrosine residue by the enzymes tubulin tyrosine carboxypeptidase (TTCP) and tubulin tyrosine ligase (TTL), respectively. Acetylation of alpha chains at Lys-40 stabilizes microtubules and affects affinity and processivity of microtubule motors. This modification has a role in multiple cellular functions, ranging from cell motility, cell cycle progression or cell differentiation to intracellular trafficking and signaling.

It is found in the cytoplasm. Its subcellular location is the cytoskeleton. The catalysed reaction is GTP + H2O = GDP + phosphate + H(+). In terms of biological role, tubulin is the major constituent of microtubules, a cylinder consisting of laterally associated linear protofilaments composed of alpha- and beta-tubulin heterodimers. Microtubules grow by the addition of GTP-tubulin dimers to the microtubule end, where a stabilizing cap forms. Below the cap, tubulin dimers are in GDP-bound state, owing to GTPase activity of alpha-tubulin. The polypeptide is Tubulin alpha-1 chain (Gossypium hirsutum (Upland cotton)).